Here is a 1141-residue protein sequence, read N- to C-terminus: LRR receptor-like serine/threonine-protein kinase RGI1 (1141 aa).

Positions 1–33 (MSLHSLIFFSSSSSSLLFSFFFIFIFCFSLSDA) are cleaved as a signal peptide. Over 34 to 726 (EQNPEASILY…DASRTRKLRL (693 aa)) the chain is Extracellular. A disulfide bridge links Cys69 with Cys77. Asn71 carries N-linked (GlcNAc...) asparagine glycosylation. LRR repeat units lie at residues 80–104 (QGFI…LPAF), 105–128 (RSLQ…LGDC), 130–152 (GLKV…LSKL), 153–176 (RNLE…ISKC), 178–200 (KLKS…LGKL), 202–225 (GLEV…IGDC), 226–249 (SNLT…LGKL), 250–273 (KKLE…LGNC), 275–297 (ELVD…IGQL), 298–321 (TKLE…IGNC), 322–345 (SNLK…IGRL), 347–369 (FLEE…ISNC), 370–392 (SSLV…ELGT), 394–417 (TKLT…LADC), 418–441 (TDLQ…LFML), 443–464 (NLTK…EIGN), 465–489 (CSSL…IGSL), 490–513 (KKIN…IGSC), 514–537 (SELQ…VSSL), 538–561 (SGLQ…LGRL), 563–585 (SLNK…LGMC), 586–609 (SGLQ…LGDI), 610–634 (ENLE…IASL), 636–657 (KLSI…LANI), and 658–682 (ENLV…LFRQ). Residue Asn116 is glycosylated (N-linked (GlcNAc...) asparagine). 2 short sequence motifs (small peptide recognition) span residues 185–186 (FD) and 207–210 (RIGG). An N-linked (GlcNAc...) asparagine glycan is attached at Asn227. 2 consecutive short sequence motifs (small peptide recognition) follow at residues 230-235 (VLGLAE) and Tyr258. Asn272 is a glycosylation site (N-linked (GlcNAc...) asparagine). The Small peptide recognition signature appears at 280–282 (FLY). Asn320 is a glycosylation site (N-linked (GlcNAc...) asparagine). 2 short sequence motifs (small peptide recognition) span residues 328 to 331 (DLSL) and 350 to 352 (EFM). N-linked (GlcNAc...) asparagine glycosylation is present at Asn368. Short sequence motifs (small peptide recognition) lie at residues 398 to 402 (LFFAW) and 424 to 427 (DLSR). A glycan (N-linked (GlcNAc...) asparagine) is linked at Asn443. The short motif at 446–450 (KLLLI) is the Small peptide recognition element. Asn464 is a glycosylation site (N-linked (GlcNAc...) asparagine). Residues 470 to 472 (RLR) carry the Small peptide recognition motif. Asn523 is a glycosylation site (N-linked (GlcNAc...) asparagine). The N-linked (GlcNAc...) asparagine glycan is linked to Asn617. Asn664 carries an N-linked (GlcNAc...) asparagine glycan. Residues 727 to 747 (TLALLITLTVVLMILGAVAVI) traverse the membrane as a helical segment. At 748–1141 (RARRNIDNER…LLYSSSSSIE (394 aa)) the chain is on the cytoplasmic side. Positions 786-1074 (LVEPNVIGKG…EIKQEREEYA (289 aa)) constitute a Protein kinase domain. ATP contacts are provided by residues 792–800 (IGKGCSGVV) and Lys814. Phosphotyrosine is present on residues Tyr868 and Tyr906. The Proton acceptor role is filled by Asp919. Tyr962 and Tyr969 each carry phosphotyrosine.

This sequence belongs to the protein kinase superfamily. Ser/Thr protein kinase family. As to quaternary structure, interacts with beet curly top virus AL4/C4. Binds to RGF peptides such as RGF1, GLV5/CLEL1/RGF2, GLV7/CLEL3/RGF3, GLV3/RGF4, GLV10/CLEL7/RGF5 and RGF10/CLELN; these interactions trigger the formation of heterodimers with SERK1, SERK2 or BAK1/SERK3 via LRR regions. Interacts with UBP13. Post-translationally, phosphorylated and ubiquitinated upon interaction with RGF1, thus leading to activation a subsequent degradation. Stabilized by UBP12 and UBP13-mediated deubiquitination. In terms of processing, autophosphorylated. In terms of tissue distribution, expressed in roots.

It is found in the cell membrane. The enzyme catalyses L-seryl-[protein] + ATP = O-phospho-L-seryl-[protein] + ADP + H(+). It catalyses the reaction L-threonyl-[protein] + ATP = O-phospho-L-threonyl-[protein] + ADP + H(+). Functionally, together with RGI2, RGI3, RGI4 and RGI5, acts as a receptor of RGF peptides (e.g. RGF1, GLV5/CLEL1/RGF2, GLV7/CLEL3/RGF3, GLV3/RGF4, GLV10/CLEL7/RGF5 and RGF10/CLELN), peptide hormones which maintain the postembryonic root stem cell niche by regulating the expression levels and patterns of the transcription factor PLETHORA (PLT, e.g. PLT1 and PLT2). Links RGF peptides signal with their downstream components. This is LRR receptor-like serine/threonine-protein kinase RGI1 from Arabidopsis thaliana (Mouse-ear cress).